The primary structure comprises 366 residues: MANVTLRNVRKTYPGGVEAIKGIDFAVGDGQFCVLVGPSGCGKSTLLRMVAGLETITKGEIDIGGRVVNDIEPADRDIAMVFQNYALYPHMSVYNNMAYGLRNRGMPKPEIDSRVREAARILEIGALLERKPKQLSGGQRQRVAMGRAIVRQPKVFLFDEPLSNLDAKLRIAMRVEIRKLQRRLNTTSIYVTHDQLEAMTLADILVVMNGGVVEQIGNPLEIYRKPASTFVASFIGAPPMNLIALEPDEIRAQFAGDVRANTEAGILGIRPEDLLISTEAAASGGLALELVVDAIERVGAETFVYGARSRHGEPVISAKPGELPPGEVIVRVPGQSAPAAGERIMVTAPREKLHLFSADGRRRIDL.

The region spanning 4 to 235 (VTLRNVRKTY…PASTFVASFI (232 aa)) is the ABC transporter domain. ATP is bound at residue 37 to 44 (GPSGCGKS).

Belongs to the ABC transporter superfamily. sn-glycerol-3-phosphate importer (TC 3.A.1.1.3) family. In terms of assembly, the complex is composed of two ATP-binding proteins (UgpC), two transmembrane proteins (UgpA and UgpE) and a solute-binding protein (UgpB).

It is found in the cell inner membrane. The catalysed reaction is sn-glycerol 3-phosphate(out) + ATP + H2O = sn-glycerol 3-phosphate(in) + ADP + phosphate + H(+). Functionally, part of the ABC transporter complex UgpBAEC involved in sn-glycerol-3-phosphate (G3P) import. Responsible for energy coupling to the transport system. This chain is sn-glycerol-3-phosphate import ATP-binding protein UgpC, found in Rhodopseudomonas palustris (strain BisB18).